A 159-amino-acid polypeptide reads, in one-letter code: Putative phosphatidylinositol-3-phosphatase (159 aa).

The first 16 residues, 1–16, serve as a signal peptide directing secretion; the sequence is MKRPSFLPVLIGTGFG. The next 4 membrane-spanning stretches (helical) occupy residues 30–50, 54–74, 104–124, and 134–154; these read LLASIIWIALYFLLPFTALLW, ALVVLFTFAGIWAANKLESCW, WYVIAAFALFRIFDIVKPLGV, and VGVMMDDVLAGVYSFILIAVA.

It is found in the membrane. It catalyses the reaction a 1,2-diacyl-sn-glycero-3-phospho-(1D-myo-inositol-3-phosphate) + H2O = a 1,2-diacyl-sn-glycero-3-phospho-(1D-myo-inositol) + phosphate. In terms of biological role, may be responsible for the conversion of phosphatidylinositol phosphate diacylglycerol (PIP-DAG) to phosphatidylinositol diacylglycerol (PI-DAG), making it a key enzyme in the inositol glycerophospholipid biosynthesis pathway. The chain is Putative phosphatidylinositol-3-phosphatase from Bacteroides thetaiotaomicron (strain ATCC 29148 / DSM 2079 / JCM 5827 / CCUG 10774 / NCTC 10582 / VPI-5482 / E50).